A 122-amino-acid chain; its full sequence is Small ribosomal subunit protein uS13 (122 aa).

A disordered region spans residues 95–122 (GLPVRGQRTHTNARTRKGKAKPIAGKKK).

Belongs to the universal ribosomal protein uS13 family. Part of the 30S ribosomal subunit. Forms a loose heterodimer with protein S19. Forms two bridges to the 50S subunit in the 70S ribosome.

Its function is as follows. Located at the top of the head of the 30S subunit, it contacts several helices of the 16S rRNA. In the 70S ribosome it contacts the 23S rRNA (bridge B1a) and protein L5 of the 50S subunit (bridge B1b), connecting the 2 subunits; these bridges are implicated in subunit movement. Contacts the tRNAs in the A and P-sites. This Zymomonas mobilis subsp. mobilis (strain ATCC 31821 / ZM4 / CP4) protein is Small ribosomal subunit protein uS13.